Here is a 309-residue protein sequence, read N- to C-terminus: Ras-like protein 1 (309 aa).

Residues 20 to 25 (GVGKSA), 36 to 42 (VDEYDPT), 66 to 67 (AG), 123 to 126 (NKLD), and 153 to 155 (SAK) each bind GTP. An Effector region motif is present at residues 39–47 (YDPTIEDSY). The interval 177–303 (KYNSMNRQLD…SANARKESSG (127 aa)) is disordered. Composition is skewed to polar residues over residues 179–188 (NSMNRQLDNT) and 209–235 (NGSY…NHNG). Over residues 236-245 (ETTKRTDEKN) the composition is skewed to basic and acidic residues. The span at 246 to 256 (YVNQNNNNEGN) shows a compositional bias: low complexity. A compositionally biased stretch (polar residues) spans 257–296 (TKYSSNGNGNRSDISRGNQNNALNSRSKQSAEPQKNSSAN). The S-palmitoyl cysteine moiety is linked to residue Cys305. A Cysteine methyl ester modification is found at Cys306. A lipid anchor (S-farnesyl cysteine) is attached at Cys306. The propeptide at 307 to 309 (IIC) is removed in mature form.

Belongs to the small GTPase superfamily. Ras family. Farnesylated by RAM1-RAM2, which is required for targeting RAS1 to the cytoplasmic site of the endoplasmic reticulum, where proteolytic processing of the C-terminus by RCE1 and methylation of the resulting carboxyl group by STE14 occurs. In terms of processing, palmitoylated by the ERF2-SHR5 complex, which is required for proper plasma membrane localization of RAS1.

The protein localises to the cell membrane. The catalysed reaction is GTP + H2O = GDP + phosphate + H(+). Its activity is regulated as follows. Alternates between an inactive form bound to GDP and an active form bound to GTP. Activated by guanine nucleotide-exchange factor (GEF) CDC25 and inactivated by GTPase-activating proteins (GAPs) IRA1 and IRA2. Functionally, the S.cerevisiae Ras proteins modulate the activity of the adenylate cyclase catalytic subunit and therefore affect the biosynthesis of cyclic-AMP. This chain is Ras-like protein 1 (RAS1), found in Saccharomyces cerevisiae (strain ATCC 204508 / S288c) (Baker's yeast).